A 532-amino-acid polypeptide reads, in one-letter code: Chondroitin sulfate N-acetylgalactosaminyltransferase 1 (532 aa).

At 1-14 (MMMVRRGLLAWISR) the chain is on the cytoplasmic side. A helical; Signal-anchor for type II membrane protein transmembrane segment spans residues 15–35 (VVVLLVLLCCAISVLYMLACT). Residues 36 to 532 (PKGDEEQLAL…QKQKTSSKKT (497 aa)) are Lumenal-facing. The stretch at 57-100 (YQAVLQEWEEQHRNYVSSLKRQIAQLKEELQERSEQLRNGQYQA) forms a coiled coil. Asparagine 315 and asparagine 324 each carry an N-linked (GlcNAc...) asparagine glycan. A divalent metal cation-binding residues include aspartate 360 and histidine 477.

Belongs to the chondroitin N-acetylgalactosaminyltransferase family. In terms of processing, N-glycosylated. In terms of tissue distribution, ubiquitous, with the highest levels in placenta, thyroid, bladder, prostate and adrenal gland. Detected at low levels in the other tissues examined.

It localises to the golgi apparatus. Its subcellular location is the golgi stack membrane. It catalyses the reaction 3-O-(beta-D-GlcA-(1-&gt;3)-beta-D-Gal-(1-&gt;3)-beta-D-Gal-(1-&gt;4)-beta-D-Xyl)-L-seryl-[protein] + UDP-N-acetyl-alpha-D-galactosamine = 3-O-(beta-D-GalNAc-(1-&gt;4)-beta-D-GlcA-(1-&gt;3)-beta-D-Gal-(1-&gt;3)-beta-D-Gal-(1-&gt;4)-beta-D-Xyl)-L-seryl-[protein] + UDP + H(+). Functionally, transfers 1,4-N-acetylgalactosamine (GalNAc) from UDP-GalNAc to the non-reducing end of glucuronic acid (GlcUA). Required for addition of the first GalNAc to the core tetrasaccharide linker and for elongation of chondroitin chains. Important role in chondroitin chain biosynthesis in cartilage formation and subsequent endochondral ossification. Moreover, is involved in the metabolism of aggrecan. The chain is Chondroitin sulfate N-acetylgalactosaminyltransferase 1 from Homo sapiens (Human).